The sequence spans 388 residues: MNIHEYQGKAIFRSMGVAVPEGRVAYTAEEAVEKAKELDSKVYVVKAQIHAGGRGKAGGVKIAKSLSEVETYAKELLGKTLVTHQTGPEGKEIKRLYIEEGCDIQKEYYVGFVIDRATDRVTLMASEEGGTEIEEVAAKTPEKIFKETIDPVVGLAPYQARRIAFNINIPKESINKAAKFLVSLYNVFIEKDCSIVEINPLVTTGEGEVLALDAKVNFDDNALFKHKDIQELRDLEEEDPKEIEASKYDLSYIALDGDIGCMVNGAGLAMATMDTINHFGGNPANFLDVGGGATKEKVTEAFKIILGDENVKGIFVNIFGGIMKCDIIAEGIVAAVKEVELTLPLVVRLEGTNVERGKEILKESGLAIEPAATMAEGAQKIVKLVKEA.

The region spanning 9-244 is the ATP-grasp domain; the sequence is KAIFRSMGVA…LEEEDPKEIE (236 aa). ATP is bound by residues K46, 53 to 55, E99, C102, and E107; that span reads GRG. N199 and D213 together coordinate Mg(2+). Substrate-binding positions include N264 and 321–323; that span reads GIM.

The protein belongs to the succinate/malate CoA ligase beta subunit family. Heterotetramer of two alpha and two beta subunits. Requires Mg(2+) as cofactor.

The enzyme catalyses succinate + ATP + CoA = succinyl-CoA + ADP + phosphate. It carries out the reaction GTP + succinate + CoA = succinyl-CoA + GDP + phosphate. Its pathway is carbohydrate metabolism; tricarboxylic acid cycle; succinate from succinyl-CoA (ligase route): step 1/1. In terms of biological role, succinyl-CoA synthetase functions in the citric acid cycle (TCA), coupling the hydrolysis of succinyl-CoA to the synthesis of either ATP or GTP and thus represents the only step of substrate-level phosphorylation in the TCA. The beta subunit provides nucleotide specificity of the enzyme and binds the substrate succinate, while the binding sites for coenzyme A and phosphate are found in the alpha subunit. The sequence is that of Succinate--CoA ligase [ADP-forming] subunit beta from Staphylococcus saprophyticus subsp. saprophyticus (strain ATCC 15305 / DSM 20229 / NCIMB 8711 / NCTC 7292 / S-41).